The chain runs to 499 residues: Rhodopsin, GQ-coupled (499 aa).

Topologically, residues methionine 1–tryptophan 50 are extracellular. N-linked (GlcNAc...) asparagine glycans are attached at residues asparagine 4, asparagine 15, and asparagine 19. The chain crosses the membrane as a helical span at residues histidine 51–isoleucine 75. Residues phenylalanine 76–asparagine 87 lie on the Cytoplasmic side of the membrane. A helical transmembrane segment spans residues leucine 88–phenylalanine 114. Residues histidine 115–tyrosine 128 are Extracellular-facing. A disulfide bridge links cysteine 125 with cysteine 203. A helical membrane pass occupies residues glycine 129–isoleucine 148. Residues aspartate 149–lysine 168 lie on the Cytoplasmic side of the membrane. A helical transmembrane segment spans residues valine 169–glycine 192. The Extracellular portion of the chain corresponds to alanine 193 to threonine 216. Residues tyrosine 217 to valine 244 form a helical membrane-spanning segment. Topologically, residues arginine 245–lysine 278 are cytoplasmic. Residues isoleucine 279–glutamine 302 form a helical membrane-spanning segment. At phenylalanine 303–threonine 310 the chain is on the extracellular side. A helical membrane pass occupies residues proline 311–serine 335. Lysine 322 is modified (N6-(retinylidene)lysine). At histidine 336–serine 499 the chain is on the cytoplasmic side. Residues cysteine 353 and cysteine 354 are each lipidated (S-palmitoyl cysteine).

This sequence belongs to the G-protein coupled receptor 1 family. Opsin subfamily. Phosphorylated on some or all of the serine and threonine residues present in the C-terminal region. Retina. Expressed in the depolarizing cell layer of the photoreceptor cells distant from the lens.

It localises to the membrane. In terms of biological role, visual pigments such as rhodopsin and porphyropsin are light-absorbing molecules that mediate vision. Rhodopsin consists of an apoprotein, opsin, covalently linked to 11-cis-retinal. This receptor is coupled to the activation of phospholipase C. Porphyropsin consists of opsin covalently linked to 11-cis 3,4-didehydroretinal. The chain is Rhodopsin, GQ-coupled (SCOP1) from Mizuhopecten yessoensis (Japanese scallop).